The chain runs to 253 residues: 23S rRNA (cytidine-2'-O)-methyltransferase TlyA (253 aa).

Residues 1-73 (MRFDFFVSKR…LKLDLLSEIY (73 aa)) enclose the S4 RNA-binding domain.

Belongs to the TlyA family.

The catalysed reaction is cytidine(1920) in 23S rRNA + S-adenosyl-L-methionine = 2'-O-methylcytidine(1920) in 23S rRNA + S-adenosyl-L-homocysteine + H(+). In terms of biological role, catalyzes the 2'-O-methylation at nucleotide C1920 in 23S rRNA. Enhances motility. Enhances biofilm formation. Involved in the assembly of 70S ribosomes. Involved in virulence by promoting adherence and invasion to host cells. Involved in pathogenicity by modulating secretion of host-protective chemokine interleukin 8 (IL-8). Involved in susceptibility to antibiotic capreomycin. The sequence is that of 23S rRNA (cytidine-2'-O)-methyltransferase TlyA from Campylobacter jejuni subsp. jejuni serotype O:23/36 (strain 81-176).